Consider the following 181-residue polypeptide: Large ribosomal subunit protein uL16 (181 aa).

This sequence belongs to the universal ribosomal protein uL16 family.

The protein is Large ribosomal subunit protein uL16 of Pyrococcus horikoshii (strain ATCC 700860 / DSM 12428 / JCM 9974 / NBRC 100139 / OT-3).